The following is a 68-amino-acid chain: Large ribosomal subunit protein uL29 (68 aa).

The protein belongs to the universal ribosomal protein uL29 family.

This Rhodospirillum rubrum (strain ATCC 11170 / ATH 1.1.1 / DSM 467 / LMG 4362 / NCIMB 8255 / S1) protein is Large ribosomal subunit protein uL29.